Reading from the N-terminus, the 195-residue chain is MLKTNQKNVHAFEIEKQEPEAVMEFLEKNHALLQYFLIIFKYDIEPEVKVILHKHQLLFLETNRPLNGRHIKTMSLKEETNHSKPNHSKTEPKTTIYERHIRSGEEIYSANHLIFLGNIHNGAKIISEGCVSVYGVCEGAIVCFGECLILKEVKSAQIVFQNKILSLKEVERLLVNKNIKIITKNDDILDIKEVL.

The protein belongs to the MinC family. In terms of assembly, interacts with MinD and FtsZ.

Cell division inhibitor that blocks the formation of polar Z ring septums. Rapidly oscillates between the poles of the cell to destabilize FtsZ filaments that have formed before they mature into polar Z rings. Prevents FtsZ polymerization. The polypeptide is Probable septum site-determining protein MinC (Helicobacter pylori (strain P12)).